A 291-amino-acid chain; its full sequence is Protease HtpX homolog (291 aa).

The next 2 helical transmembrane spans lie at 4 to 24 (IALF…VASL) and 38 to 58 (LGAL…ISLL). His-144 is a Zn(2+) binding site. Glu-145 is a catalytic residue. His-148 provides a ligand contact to Zn(2+). Helical transmembrane passes span 159-179 (LIQG…GYAV) and 199-219 (VTTI…VAWF). Residue Glu-224 participates in Zn(2+) binding.

This sequence belongs to the peptidase M48B family. Requires Zn(2+) as cofactor.

Its subcellular location is the cell inner membrane. This is Protease HtpX homolog from Paracidovorax citrulli (strain AAC00-1) (Acidovorax citrulli).